Consider the following 157-residue polypeptide: MAPIRNRRGKRNNLKLKLNLTEEITIRNNCNFDSLPIRGPKEVRNPCRSRYAPMTRAEKKYQDRQNRDFYCSTDASYWGIYYRNSHPLKGVTYRSHVMFGIKKFIPDMSPKNAIDYNRWVDVSSDLNHLEDDDFLELEGQYAAGIIKTSDLSKYALQ.

This is an uncharacterized protein from Magallana gigas (Pacific oyster).